Consider the following 147-residue polypeptide: 3-dehydroquinate dehydratase (147 aa).

Tyr22 serves as the catalytic Proton acceptor. Positions 74, 80, and 87 each coordinate substrate. His101 functions as the Proton donor in the catalytic mechanism. Substrate-binding positions include 102–103 and Arg112; that span reads IS.

The protein belongs to the type-II 3-dehydroquinase family. As to quaternary structure, homododecamer.

The catalysed reaction is 3-dehydroquinate = 3-dehydroshikimate + H2O. It functions in the pathway metabolic intermediate biosynthesis; chorismate biosynthesis; chorismate from D-erythrose 4-phosphate and phosphoenolpyruvate: step 3/7. Functionally, catalyzes a trans-dehydration via an enolate intermediate. The protein is 3-dehydroquinate dehydratase of Lachnospira eligens (strain ATCC 27750 / DSM 3376 / VPI C15-48 / C15-B4) (Eubacterium eligens).